The primary structure comprises 146 residues: Large ribosomal subunit protein uL15 (146 aa).

The segment at 1 to 54 (MNLTDLRPADGSKQSGNFRRGRGHGSGNGKTAGKGHKGQKARSGAPRVGFEGGQ) is disordered.

The protein belongs to the universal ribosomal protein uL15 family. As to quaternary structure, part of the 50S ribosomal subunit.

Its function is as follows. Binds to the 23S rRNA. This Lachnoclostridium phytofermentans (strain ATCC 700394 / DSM 18823 / ISDg) (Clostridium phytofermentans) protein is Large ribosomal subunit protein uL15.